The chain runs to 79 residues: Exodeoxyribonuclease 7 small subunit (79 aa).

It belongs to the XseB family. Heterooligomer composed of large and small subunits.

It localises to the cytoplasm. The catalysed reaction is Exonucleolytic cleavage in either 5'- to 3'- or 3'- to 5'-direction to yield nucleoside 5'-phosphates.. Its function is as follows. Bidirectionally degrades single-stranded DNA into large acid-insoluble oligonucleotides, which are then degraded further into small acid-soluble oligonucleotides. The protein is Exodeoxyribonuclease 7 small subunit of Geobacillus kaustophilus (strain HTA426).